Here is a 315-residue protein sequence, read N- to C-terminus: Acetyl-coenzyme A carboxylase carboxyl transferase subunit alpha (315 aa).

A CoA carboxyltransferase C-terminal domain is found at 38–292; that stretch reads RLQKKSNELT…KLRLKEDLAE (255 aa).

It belongs to the AccA family. As to quaternary structure, acetyl-CoA carboxylase is a heterohexamer composed of biotin carboxyl carrier protein (AccB), biotin carboxylase (AccC) and two subunits each of ACCase subunit alpha (AccA) and ACCase subunit beta (AccD).

It is found in the cytoplasm. It catalyses the reaction N(6)-carboxybiotinyl-L-lysyl-[protein] + acetyl-CoA = N(6)-biotinyl-L-lysyl-[protein] + malonyl-CoA. The protein operates within lipid metabolism; malonyl-CoA biosynthesis; malonyl-CoA from acetyl-CoA: step 1/1. Its function is as follows. Component of the acetyl coenzyme A carboxylase (ACC) complex. First, biotin carboxylase catalyzes the carboxylation of biotin on its carrier protein (BCCP) and then the CO(2) group is transferred by the carboxyltransferase to acetyl-CoA to form malonyl-CoA. The sequence is that of Acetyl-coenzyme A carboxylase carboxyl transferase subunit alpha from Haemophilus influenzae (strain PittEE).